A 75-amino-acid chain; its full sequence is Tautomerase PptA (75 aa).

The Proton acceptor; via imino nitrogen role is filled by Pro2.

The protein belongs to the 4-oxalocrotonate tautomerase family. PptA subfamily. In terms of assembly, homodimer.

The protein localises to the cytoplasm. The chain is Tautomerase PptA from Klebsiella pneumoniae subsp. pneumoniae (strain ATCC 700721 / MGH 78578).